The sequence spans 232 residues: Flagellar L-ring protein (232 aa).

The first 21 residues, Met-1 to Gly-21, serve as a signal peptide directing secretion. Cys-22 is lipidated: N-palmitoyl cysteine. Cys-22 carries the S-diacylglycerol cysteine lipid modification.

It belongs to the FlgH family. In terms of assembly, the basal body constitutes a major portion of the flagellar organelle and consists of four rings (L,P,S, and M) mounted on a central rod.

The protein localises to the cell outer membrane. The protein resides in the bacterial flagellum basal body. Functionally, assembles around the rod to form the L-ring and probably protects the motor/basal body from shearing forces during rotation. The sequence is that of Flagellar L-ring protein from Shigella dysenteriae serotype 1 (strain Sd197).